A 295-amino-acid polypeptide reads, in one-letter code: UTP--glucose-1-phosphate uridylyltransferase (295 aa).

This sequence belongs to the UDPGP type 2 family.

It catalyses the reaction alpha-D-glucose 1-phosphate + UTP + H(+) = UDP-alpha-D-glucose + diphosphate. In terms of biological role, may play a role in stationary phase survival. The chain is UTP--glucose-1-phosphate uridylyltransferase (galU) from Haemophilus ducreyi (strain 35000HP / ATCC 700724).